The primary structure comprises 299 residues: Bifunctional protein FolD (299 aa).

NADP(+) is bound by residues 168 to 170 (GRS), serine 193, and isoleucine 234.

The protein belongs to the tetrahydrofolate dehydrogenase/cyclohydrolase family. In terms of assembly, homodimer.

It carries out the reaction (6R)-5,10-methylene-5,6,7,8-tetrahydrofolate + NADP(+) = (6R)-5,10-methenyltetrahydrofolate + NADPH. It catalyses the reaction (6R)-5,10-methenyltetrahydrofolate + H2O = (6R)-10-formyltetrahydrofolate + H(+). It functions in the pathway one-carbon metabolism; tetrahydrofolate interconversion. Its function is as follows. Catalyzes the oxidation of 5,10-methylenetetrahydrofolate to 5,10-methenyltetrahydrofolate and then the hydrolysis of 5,10-methenyltetrahydrofolate to 10-formyltetrahydrofolate. The polypeptide is Bifunctional protein FolD (Bartonella tribocorum (strain CIP 105476 / IBS 506)).